Reading from the N-terminus, the 152-residue chain is 3-hydroxyacyl-[acyl-carrier-protein] dehydratase FabZ (152 aa).

The active site involves His57.

This sequence belongs to the thioester dehydratase family. FabZ subfamily.

The protein resides in the cytoplasm. The enzyme catalyses a (3R)-hydroxyacyl-[ACP] = a (2E)-enoyl-[ACP] + H2O. Functionally, involved in unsaturated fatty acids biosynthesis. Catalyzes the dehydration of short chain beta-hydroxyacyl-ACPs and long chain saturated and unsaturated beta-hydroxyacyl-ACPs. The protein is 3-hydroxyacyl-[acyl-carrier-protein] dehydratase FabZ of Xanthomonas axonopodis pv. citri (strain 306).